The sequence spans 588 residues: Nucleoporin ndc-1 (588 aa).

The span at 1-12 shows a compositional bias: polar residues; it reads MMGDSHSSFTTT. The interval 1–55 is disordered; the sequence is MMGDSHSSFTTTTDEHLYNQFSPGRRKNDFPAASSSSSSPNLRRSPNRTVSSPRV. The Cytoplasmic segment spans residues 1-79; that stretch reads MMGDSHSSFT…FQAEISVRKR (79 aa). Over residues 31-48 the composition is skewed to low complexity; it reads PAASSSSSSPNLRRSPNR. The chain crosses the membrane as a helical span at residues 80–100; the sequence is LAGAACGYLSTIFFIVTVSIL. The Perinuclear space segment spans residues 101–122; sequence KLTIWAPFSSVQDSLAWWIYPN. A helical membrane pass occupies residues 123-143; it reads AWASIIFVGIASVAMSLFSII. Topologically, residues 144–159 are cytoplasmic; it reads KFCKVDQLPRLAATDT. A helical membrane pass occupies residues 160-180; the sequence is FALAGVALEFVTRLTFVYTAF. Over 181–190 the chain is Perinuclear space; that stretch reads CVADFSFSRE. Residues 191–211 traverse the membrane as a helical segment; sequence FAFVAISLAIAISSALVVFRS. Residues 212 to 255 are Cytoplasmic-facing; the sequence is DYQLNFSHIQVNSVKTLIDFGTSLPYANISEICGIDAAISYTAA. The chain crosses the membrane as a helical span at residues 256 to 276; the sequence is VALILVVGPMVSGFSAWWLLL. Residue Asn-277 is a topological domain, perinuclear space. Residues 278–298 traverse the membrane as a helical segment; that stretch reads IPFHVVLFGLCFTQQFYSKIS. The Cytoplasmic segment spans residues 299 to 588; that stretch reads MKIVNQIVMK…IRMICLTDEL (290 aa).

It belongs to the NDC1 family.

The protein localises to the nucleus. Its subcellular location is the nuclear pore complex. It localises to the nucleus membrane. Functionally, component of the nuclear pore complex (NPC), which plays a key role in de novo assembly and insertion of NPC in the nuclear envelope. Plays a role in postmitotic nuclear pore complex assembly potentially by promoting localization of nuclear pore complex proteins to the nuclear rim. The protein is Nucleoporin ndc-1 of Caenorhabditis elegans.